The primary structure comprises 271 residues: MSDMRLIVAGAGGRMGRALIRAITETPGAVVAGALEAPTSALLGQDAGTLAGLPPSGVKLSADLWALSAEADGIVDFTVPEATIANVAIAAQRGMVHVIGTTGLTASDDAVISSVTSRATVVKSGNMSLGVNLLAALVKRVARSLDDGFDIEIVEMHHKAKIDAPSGTALLLGEAAAAGRGVALAEHSIRGRDGVTGARKAGDIGFASLRGGTVTGDHTVIFAGPYERIELTHKAEDRMIFAHGALKAALWARDQGPGLYSMADVLGLSDI.

NAD(+) is bound by residues 10–15 (GAGGRM), Glu36, 100–102 (GTT), and 124–127 (SGNM). The active-site Proton donor/acceptor is the His157. Position 158 (His158) interacts with (S)-2,3,4,5-tetrahydrodipicolinate. Lys161 acts as the Proton donor in catalysis. 167–168 (GT) serves as a coordination point for (S)-2,3,4,5-tetrahydrodipicolinate.

The protein belongs to the DapB family.

The protein resides in the cytoplasm. It catalyses the reaction (S)-2,3,4,5-tetrahydrodipicolinate + NAD(+) + H2O = (2S,4S)-4-hydroxy-2,3,4,5-tetrahydrodipicolinate + NADH + H(+). It carries out the reaction (S)-2,3,4,5-tetrahydrodipicolinate + NADP(+) + H2O = (2S,4S)-4-hydroxy-2,3,4,5-tetrahydrodipicolinate + NADPH + H(+). It functions in the pathway amino-acid biosynthesis; L-lysine biosynthesis via DAP pathway; (S)-tetrahydrodipicolinate from L-aspartate: step 4/4. In terms of biological role, catalyzes the conversion of 4-hydroxy-tetrahydrodipicolinate (HTPA) to tetrahydrodipicolinate. The sequence is that of 4-hydroxy-tetrahydrodipicolinate reductase from Rhodopseudomonas palustris (strain BisB18).